The primary structure comprises 141 residues: MEQTLSIIKPDSVGKAHIGEIVAIFEKAGFRIAAMKMVHLSAKEAEGFYAVHKSRPFFQELVDFMISGPVVVMVLEGDNAVVRNREIMGATNPQEAAQGTIRAQFGESIGINAVHGSDSLENAAIEISYFFSKTEIVNSVE.

The ATP site is built by K9, F57, R85, T91, R102, and N112. Residue H115 is the Pros-phosphohistidine intermediate of the active site.

This sequence belongs to the NDK family. In terms of assembly, homotetramer. Requires Mg(2+) as cofactor.

The protein resides in the cytoplasm. The catalysed reaction is a 2'-deoxyribonucleoside 5'-diphosphate + ATP = a 2'-deoxyribonucleoside 5'-triphosphate + ADP. The enzyme catalyses a ribonucleoside 5'-diphosphate + ATP = a ribonucleoside 5'-triphosphate + ADP. Major role in the synthesis of nucleoside triphosphates other than ATP. The ATP gamma phosphate is transferred to the NDP beta phosphate via a ping-pong mechanism, using a phosphorylated active-site intermediate. This is Nucleoside diphosphate kinase from Chlamydia felis (strain Fe/C-56) (Chlamydophila felis).